A 369-amino-acid chain; its full sequence is MSXDEYALNKQELKALIKELKKWKAPATVLLSLYIPPGRPIPDVVNLLRQEYSIAQNIKLKRTRDAVLSAIGAAIDRLNKIPKIDGNGLVLFCGENFDTEDFKCFMFSPPDKVPLFFYRTDKEFHLEFLEDMVEDTAVYGLIIVERDEATIGLLKGARIEILEEIEGFVPGKHMMGGQSQRRIDRIIDEMYHNFLKEVGEKVNAYFMPFVQNGKMKGVLLGGPGYAKEDFYKEDYVDYRIKNLILQPLIDVSDQGEVGLREMIMKAEDLLKNQQYIEVEKLLEELKYHLAKDDGLIIYGKEQIKKAMEIGAIEAIVIHEDSTDKELEKLAQDAENYGVKVFVVGDEVPEAEWVKKTFNGIVGKLRYRLY.

The protein belongs to the eukaryotic release factor 1 family. As to quaternary structure, heterodimer of two subunits, one of which binds GTP.

Its subcellular location is the cytoplasm. Directs the termination of nascent peptide synthesis (translation) in response to the termination codons UAA, UAG and UGA. The protein is Peptide chain release factor subunit 1 (prf1) of Saccharolobus solfataricus (strain ATCC 35092 / DSM 1617 / JCM 11322 / P2) (Sulfolobus solfataricus).